A 256-amino-acid polypeptide reads, in one-letter code: Dihydromonacolin L-[lovastatin nonaketide synthase] thioesterase (256 aa).

Residues Ser122, Asp201, and His229 each act as charge relay system in the active site.

It belongs to the LovG family.

The catalysed reaction is dihydromonacolin L-[lovastatin nonaketide synthase] + H2O = holo-[lovastatin nonaketide synthase] + dihydromonacolin L carboxylate + H(+). Its pathway is polyketide biosynthesis; lovastatin biosynthesis. Functionally, esterase; part of the gene cluster that mediates the biosynthesis of lovastatin (also known as mevinolin, mevacor or monacolin K), a hypolipidemic inhibitor of (3S)-hydroxymethylglutaryl-coenzyme A (HMG-CoA) reductase (HMGR). The first step in the biosynthesis of lovastatin is the production of dihydromonacolin L acid by the lovastatin nonaketide synthase lovB and the trans-acting enoyl reductase lovC via condensation of one acetyl-CoA unit and 8 malonyl-CoA units. Dihydromonacolin L acid is released from lovB by the thioesterase lovG. Next, dihydromonacolin L acid is oxidized by the dihydromonacolin L monooxygenase lovA twice to form monacolin J acid. The 2-methylbutyrate moiety of lovastatin is synthesized by the lovastatin diketide synthase lovF via condensation of one acetyl-CoA unit and one malonyl-CoA unit. Finally, the covalent attachment of this moiety to monacolin J acid is catalyzed by the transesterase lovD to yield lovastatin. LovD has broad substrate specificity and can also convert monacolin J to simvastatin using alpha-dimethylbutanoyl-S-methyl-3-mercaptopropionate (DMB-S-MMP) as the thioester acyl donor, and can also catalyze the reverse reaction and function as hydrolase in vitro. LovD has much higher activity with LovF-bound 2-methylbutanoate than with free diketide substrates. Esterase that catalyzes the release of covalently bound dihydromonacolin L from LovB during lovastatin biosynthesis. In Aspergillus terreus, this protein is Dihydromonacolin L-[lovastatin nonaketide synthase] thioesterase.